The following is a 247-amino-acid chain: GTP cyclohydrolase 1 type 2 homolog (247 aa).

The a divalent metal cation site is built by His-63, His-64, Asp-101, His-215, and Glu-219.

This sequence belongs to the GTP cyclohydrolase I type 2/NIF3 family. In terms of assembly, homohexamer.

The sequence is that of GTP cyclohydrolase 1 type 2 homolog from Buchnera aphidicola subsp. Acyrthosiphon pisum (strain APS) (Acyrthosiphon pisum symbiotic bacterium).